A 240-amino-acid chain; its full sequence is Protein MGARP (240 aa).

Residues 1 to 45 (MYLRRAVSKTLALPLRAPPGPAPLRKDASLRWISSNKFPGSSGSN) lie on the Cytoplasmic side of the membrane. A helical; Anchor for type IV membrane protein membrane pass occupies residues 46–64 (MIYYLVVGVTVSAGGYYTY). Over 65 to 240 (KRVTSGKAKR…AGSEAASAQG (176 aa)) the chain is Mitochondrial intermembrane. The segment at 72–240 (AKRSDHVTDL…AGSEAASAQG (169 aa)) is disordered. A compositionally biased stretch (basic and acidic residues) spans 73–87 (KRSDHVTDLKEKTKA). Composition is skewed to low complexity over residues 166-183 (TVET…VTST) and 228-240 (EACA…SAQG).

Interacts with RHOT1/Miro-1, RHOT2/Miro-2, TRAK1/OIP106 and TRAK2/GRIF1.

The protein localises to the mitochondrion. It is found in the mitochondrion outer membrane. It localises to the mitochondrion inner membrane. Functionally, plays a role in the trafficking of mitochondria along microtubules. Regulates the kinesin-mediated axonal transport of mitochondria to nerve terminals along microtubules during hypoxia. Participates in the translocation of TRAK2/GRIF1 from the cytoplasm to the mitochondrion. Also plays a role in steroidogenesis through maintenance of mitochondrial abundance and morphology. Plays an inhibitory role during neocortex development by regulating mitochondrial morphology, distribution and motility in neocortical neurons. This is Protein MGARP (MGARP) from Bos taurus (Bovine).